The chain runs to 238 residues: Ribonuclease PH (238 aa).

Residues R86 and 124 to 126 (GTR) contribute to the phosphate site.

It belongs to the RNase PH family. Homodimer. Has a tendency to aggregate into multimers. Requires Mg(2+) as cofactor.

The catalysed reaction is tRNA(n+1) + phosphate = tRNA(n) + a ribonucleoside 5'-diphosphate. Functionally, phosphorolytic exoribonuclease that plays an important role in tRNA 3'-end maturation; has no activity on a tRNA precursor with a 3'-terminal phosphate group. In vitro is freely reversible, adds nucleotides to the ends of RNA molecules by using nucleoside diphosphates as substrates, but this may not be physiologically important. Probably plays a role in initiation of 16S rRNA degradation (leading to ribosome degradation) during starvation. This is Ribonuclease PH from Escherichia coli (strain K12 / MC4100 / BW2952).